Consider the following 1038-residue polypeptide: Kinesin-like protein KIN-5B (1038 aa).

Residues 1-63 (MAQTPNPSRR…GGGGGGGSEM (63 aa)) are disordered. Basic and acidic residues predominate over residues 24–34 (RPERRQLELRW). Over residues 49-61 (GLTGGGGGGGGGS) the composition is skewed to gly residues. Positions 69 to 410 (NVQVVLRCRP…LDYAYRAKSI (342 aa)) constitute a Kinesin motor domain. 154–161 (GQTGTGKT) provides a ligand contact to ATP. A coiled-coil region spans residues 453–502 (QERFALEEAEKKTMRDKIEYLETQNKELKMNIESCKKEYLDLEEAHSRAN). Residues 1013-1038 (DKGKRYVDQGTRTPRSPLMPVNHYNK) form a disordered region.

The protein belongs to the TRAFAC class myosin-kinesin ATPase superfamily. Kinesin family. KIN-5/BimC subfamily.

Its subcellular location is the cytoplasm. It is found in the cytoskeleton. The protein resides in the spindle. In terms of biological role, responsible for microtubule translocation. May be important for the organization of phragmoplast-specific arrays of microtubules. Plays an essential role in stabilizing the mitotic spindle. Required during mitotic cytokinesis. This chain is Kinesin-like protein KIN-5B, found in Oryza sativa subsp. japonica (Rice).